A 264-amino-acid chain; its full sequence is Protein GrpE (264 aa).

Over residues 36-49 (KVQSKKVSSDHSSS) the composition is skewed to basic and acidic residues. Positions 36-59 (KVQSKKVSSDHSSSEDNASSDINS) are disordered. Over residues 50 to 59 (EDNASSDINS) the composition is skewed to low complexity.

It belongs to the GrpE family. In terms of assembly, homodimer.

Its subcellular location is the cytoplasm. Participates actively in the response to hyperosmotic and heat shock by preventing the aggregation of stress-denatured proteins, in association with DnaK and GrpE. It is the nucleotide exchange factor for DnaK and may function as a thermosensor. Unfolded proteins bind initially to DnaJ; upon interaction with the DnaJ-bound protein, DnaK hydrolyzes its bound ATP, resulting in the formation of a stable complex. GrpE releases ADP from DnaK; ATP binding to DnaK triggers the release of the substrate protein, thus completing the reaction cycle. Several rounds of ATP-dependent interactions between DnaJ, DnaK and GrpE are required for fully efficient folding. The protein is Protein GrpE of Peanut witches'-broom phytoplasma.